The following is a 90-amino-acid chain: UPF0335 protein bsl7135 (90 aa).

The protein belongs to the UPF0335 family.

The polypeptide is UPF0335 protein bsl7135 (Bradyrhizobium diazoefficiens (strain JCM 10833 / BCRC 13528 / IAM 13628 / NBRC 14792 / USDA 110)).